A 412-amino-acid polypeptide reads, in one-letter code: Adipocyte plasma membrane-associated protein (412 aa).

The segment at 1-32 (MTEADGLRQRRPLRPQVVTDDNRTPEAKGGSS) is disordered. The Cytoplasmic segment spans residues 1 to 39 (MTEADGLRQRRPLRPQVVTDDNRTPEAKGGSSFSGRVFR). T19 carries the post-translational modification Phosphothreonine. A helical transmembrane segment spans residues 40–60 (ATFLMLAAFLTIPLLGALVLL). Residues 61–412 (DSPIDPEPLS…RAPYLCRLRL (352 aa)) are Extracellular-facing. Residue N159 is glycosylated (N-linked (GlcNAc...) asparagine).

This sequence belongs to the strictosidine synthase family.

The protein resides in the membrane. Functionally, exhibits strong arylesterase activity with beta-naphthyl acetate and phenyl acetate. May play a role in adipocyte differentiation. The polypeptide is Adipocyte plasma membrane-associated protein (APMAP) (Bos taurus (Bovine)).